Here is a 316-residue protein sequence, read N- to C-terminus: Ribosomal RNA small subunit methyltransferase H (316 aa).

S-adenosyl-L-methionine-binding positions include 35–37, D55, F84, D105, and Q112; that span reads AGH.

Belongs to the methyltransferase superfamily. RsmH family.

It is found in the cytoplasm. It carries out the reaction cytidine(1402) in 16S rRNA + S-adenosyl-L-methionine = N(4)-methylcytidine(1402) in 16S rRNA + S-adenosyl-L-homocysteine + H(+). Functionally, specifically methylates the N4 position of cytidine in position 1402 (C1402) of 16S rRNA. This is Ribosomal RNA small subunit methyltransferase H from Streptococcus uberis (strain ATCC BAA-854 / 0140J).